A 707-amino-acid polypeptide reads, in one-letter code: Ferric reduction oxidase 5 (707 aa).

Residues 1 to 9 (MGNMRSLVK) lie on the Cytoplasmic side of the membrane. The helical transmembrane segment at 10–29 (MLMVVLFLGWIFVWIMISTN) threads the bilayer. Residues 30-54 (RFQNIWTPKLAKYLKTTYFGPQGMN) are Extracellular-facing. Residues 55–73 (LVLLTVPMMFIAVLSCVYL) traverse the membrane as a helical segment. The Cytoplasmic portion of the chain corresponds to 74–106 (HTQKQPSQTQSLYKCREWKVKGRMGRVMMVMNP). A helical membrane pass occupies residues 107–130 (LGIVTATELTFSLLFLALLVWALS). Residues 131 to 198 (NYLYLSYHVH…VGLTSESSIK (68 aa)) lie on the Extracellular side of the membrane. A Ferric oxidoreductase domain is found at 165 to 284 (GYVGHYCWAF…HLYGLYIVFY (120 aa)). A helical transmembrane segment spans residues 199–222 (YHIWLGHVSNFCFLVHTVVFLIYW). 2 residues coordinate heme: His-200 and His-214. Over 223-272 (AMVNKLMETFAWNATYVPNLAGTIAMVIGIAIWVTSLPSFRRKKFEIFFY) the chain is Cytoplasmic. The chain crosses the membrane as a helical span at residues 273–297 (THHLYGLYIVFYAIHVGDSWFCMIL). Heme contacts are provided by His-274 and His-287. Over 298-319 (PNIFLFFIDRYLRFLQSTKRSR) the chain is Extracellular. The FAD-binding FR-type domain maps to 313 to 416 (QSTKRSRLVS…EGPYGPNSFD (104 aa)). A helical membrane pass occupies residues 320-340 (LVSAKILPSDNLELTFAKTSG). The Cytoplasmic portion of the chain corresponds to 341-533 (LHYTPTSILF…PISPVLGPNN (193 aa)). Residue 362-365 (HPFT) coordinates FAD. Residue 408-411 (GPYG) coordinates NAD(+). A helical transmembrane segment spans residues 534–556 (FLWLGVVILSSFVMFLLLIGIVT). Over 557–576 (RYYIYPVDHNTGSIYNFTYR) the chain is Extracellular. The helical transmembrane segment at 577 to 598 (VLWVMFLGCVCIFISSSIIFLW) threads the bilayer. Over 599 to 707 (RKKENKEGDK…LHFEAISFNW (109 aa)) the chain is Cytoplasmic. The interval 608-630 (KDSKKQVQSVEFQTPTSSPGSWF) is disordered. Residues 613–627 (QVQSVEFQTPTSSPG) show a composition bias toward polar residues.

The protein belongs to the ferric reductase (FRE) family. Requires FAD as cofactor. Expressed at low levels in roots, shoots, pedicels and inflorescence stems, flowers, sepals, stigmas and anther filaments.

The protein localises to the cell membrane. The enzyme catalyses 2 a Fe(II)-siderophore + NAD(+) + H(+) = 2 a Fe(III)-siderophore + NADH. Its function is as follows. Ferric chelate reductase probably involved in iron reduction in shoots. May participate in the transport of electrons to a Fe(3+) ion via FAD and heme intermediates. May act in iron metabolism in reproductive organs. May function as root surface cupric chelate reductase and participate in the reduction of Cu(2+), for Cu(+) acquisition via Cu(+) transporters in response to copper deficiency. This chain is Ferric reduction oxidase 5 (FRO5), found in Arabidopsis thaliana (Mouse-ear cress).